The primary structure comprises 306 residues: Manganese-binding lipoprotein MntA (306 aa).

A signal peptide spans 1 to 18; that stretch reads MRQGLMAAVLFATFALTG. C19 carries N-palmitoyl cysteine lipidation. Residue C19 is the site of S-diacylglycerol cysteine attachment. Residues H66, H132, H198, and D278 each coordinate Mn(2+).

Belongs to the bacterial solute-binding protein 9 family. As to quaternary structure, the complex is probably composed of two ATP-binding proteins (MntB), two transmembrane proteins (MntC and MntD) and a solute-binding protein (MntA). Interacts with FloT.

The protein localises to the cell membrane. The protein resides in the membrane raft. Probably part of ATP-binding cassette (ABC) transport system MntABCD involved in manganese import. Binds manganese and delivers it to the membrane permease for translocation into the cytoplasm. The chain is Manganese-binding lipoprotein MntA from Bacillus subtilis (strain 168).